Here is an 87-residue protein sequence, read N- to C-terminus: U3-theraphotoxin-Hhn1m (87 aa).

The signal sequence occupies residues 1 to 24 (MVNMKASMFLTFAGLVLLFVVCYA). The propeptide occupies 25–52 (SESEEKEFPKEMLSSIFAVDNDFKQEER). Disulfide bonds link Cys-54–Cys-67, Cys-61–Cys-72, and Cys-66–Cys-79.

Belongs to the neurotoxin 10 (Hwtx-1) family. 51 (Hntx-8) subfamily. Hntx-8 sub-subfamily. As to expression, expressed by the venom gland.

It localises to the secreted. Its function is as follows. Ion channel inhibitor. The protein is U3-theraphotoxin-Hhn1m of Cyriopagopus hainanus (Chinese bird spider).